The following is an 812-amino-acid chain: Plasminogen (812 aa).

A signal peptide spans 1-19 (MDHKEVILLFLLLLKPGQG). Residues 20–98 (DSLDGYISTQ…RDVILFEKRV (79 aa)) form the PAN domain. 21 disulfide bridges follow: Cys49/Cys73, Cys53/Cys61, Cys103/Cys181, Cys124/Cys164, Cys152/Cys176, Cys185/Cys262, Cys188/Cys316, Cys206/Cys245, Cys234/Cys257, Cys275/Cys352, Cys296/Cys335, Cys324/Cys347, Cys377/Cys454, Cys398/Cys437, Cys426/Cys449, Cys481/Cys560, Cys502/Cys543, Cys531/Cys555, Cys568/Cys687, Cys578/Cys586, and Cys609/Cys625. 5 consecutive Kringle domains span residues 103 to 181 (CKTG…IPEC), 184 to 262 (ECMY…IPRC), 275 to 352 (CLKG…IPSC), 377 to 454 (CYQS…LKRC), and 481 to 560 (CMYG…IPLC). In terms of domain architecture, Peptidase S1 spans 582–810 (VVGGCVANPH…FVDWIEREMR (229 aa)). At Ser598 the chain carries Phosphoserine. Active-site charge relay system residues include His624 and Asp667. Residue Ser690 is modified to Phosphoserine. 3 disulfides stabilise this stretch: Cys701–Cys768, Cys731–Cys747, and Cys758–Cys786. Residue Ser762 is the Charge relay system of the active site.

It belongs to the peptidase S1 family. Plasminogen subfamily. As to quaternary structure, interacts (both mature PLG and the angiostatin peptide) with AMOT and CSPG4. Interacts (via the Kringle domains) with HRG; the interaction tethers PLG to the cell surface and enhances its activation. Interacts (via Kringle 4 domain) with ADA; the interaction stimulates PLG activation when in complex with DPP4. Angiostatin: Interacts with ATP5F1A; the interaction inhibits most of the angiogenic effects of angiostatin. In terms of processing, in the presence of the inhibitor, the activation involves only cleavage after Arg-581, yielding two chains held together by two disulfide bonds. In the absence of the inhibitor, the activation involves additionally the removal of the activation peptide.

Its subcellular location is the secreted. The catalysed reaction is Preferential cleavage: Lys-|-Xaa &gt; Arg-|-Xaa, higher selectivity than trypsin. Converts fibrin into soluble products.. Converted into plasmin by plasminogen activators, both plasminogen and its activator being bound to fibrin. Cannot be activated with streptokinase. Plasmin dissolves the fibrin of blood clots and acts as a proteolytic factor in a variety of other processes including embryonic development, tissue remodeling, tumor invasion, and inflammation. In ovulation, weakens the walls of the Graafian follicle. It activates the urokinase-type plasminogen activator, collagenases and several complement zymogens, such as C1, C4 and C5. Cleavage of fibronectin and laminin leads to cell detachment and apoptosis. Also cleaves fibrin, thrombospondin and von Willebrand factor. Its role in tissue remodeling and tumor invasion may be modulated by CSPG4. Binds to cells. Functionally, angiostatin is an angiogenesis inhibitor that blocks neovascularization and growth of experimental primary and metastatic tumors in vivo. In Mus musculus (Mouse), this protein is Plasminogen (Plg).